We begin with the raw amino-acid sequence, 470 residues long: Aspartyl aminopeptidase (470 aa).

His92 serves as a coordination point for Zn(2+). Position 166 (His166) interacts with substrate. Asp263 is a Zn(2+) binding site. Residue Glu299 coordinates substrate. Glu300 and Asp343 together coordinate Zn(2+). Asp343, His346, Lys371, and Tyr378 together coordinate substrate. His437 is a binding site for Zn(2+).

This sequence belongs to the peptidase M18 family. As to quaternary structure, tetrahedron-shaped homododecamer built from six homodimers. Zn(2+) serves as cofactor. In terms of tissue distribution, expressed in various cell types and tissues including the pharynx, neurons, body wall muscle, intestine and vulva.

It is found in the cytoplasm. Its subcellular location is the cytosol. It catalyses the reaction Release of an N-terminal aspartate or glutamate from a peptide, with a preference for aspartate.. Functionally, aminopeptidase with specificity towards an acidic amino acid at the N-terminus. Plays a role in membrane trafficking and is specifically involved in the recycling and degradation of endocytic cargo. This chain is Aspartyl aminopeptidase, found in Caenorhabditis elegans.